We begin with the raw amino-acid sequence, 226 residues long: MENPAFKRAIRSFVLRQGHLSAGQQRAMDEGMPKWGIEYRPETMDLEQVFGRAAPKILEIGFGMGGATAEIAAANPDNDYLGIEVHGPGVGNLCKLIAEKELTNLRLMRHDAVEVLDNMLADGSLDGVHIFFPDPWHKKRHNKRRLIQAPLVEKLAKKLKPGGYFHAATDWEDYAIQILEVLNGNADLENTADGYAPRPDYRPLTKFEARGIKLGHGVWDVIFRRK.

S-adenosyl-L-methionine-binding residues include Glu59, Glu84, Asp111, and Asp134. The active site involves Asp134. Residue Lys138 participates in substrate binding. Residues 140-145 (RHNKRR) are interaction with RNA. Substrate contacts are provided by residues Asp170 and 205–208 (TKFE).

The protein belongs to the class I-like SAM-binding methyltransferase superfamily. TrmB family.

The enzyme catalyses guanosine(46) in tRNA + S-adenosyl-L-methionine = N(7)-methylguanosine(46) in tRNA + S-adenosyl-L-homocysteine. The protein operates within tRNA modification; N(7)-methylguanine-tRNA biosynthesis. In terms of biological role, catalyzes the formation of N(7)-methylguanine at position 46 (m7G46) in tRNA. The chain is tRNA (guanine-N(7)-)-methyltransferase from Chromobacterium violaceum (strain ATCC 12472 / DSM 30191 / JCM 1249 / CCUG 213 / NBRC 12614 / NCIMB 9131 / NCTC 9757 / MK).